The following is a 249-amino-acid chain: Metal-staphylopine import system ATP-binding protein CntF (249 aa).

An ABC transporter domain is found at 2–244; that stretch reads IKVTDVEKSY…DNAYTRELIE (243 aa). ATP is bound at residue 42 to 49; that stretch reads GESGSGKS.

The protein belongs to the ABC transporter superfamily. The complex is composed of two ATP-binding proteins (CntD and CntF), two transmembrane proteins (CntB and CntC) and a solute-binding protein (CntA).

It is found in the cell membrane. Part of the ABC transporter complex CntABCDF (Opp1) involved in the uptake of metal in complex with the metallophore staphylopine (StP). May be involved in the import of a large array of divalent metals ions such as nickel, cobalt, zinc, copper and iron. Probably responsible for energy coupling to the transport system. This Staphylococcus aureus (strain Mu50 / ATCC 700699) protein is Metal-staphylopine import system ATP-binding protein CntF.